Consider the following 254-residue polypeptide: Alcohol dehydrogenase 2 (254 aa).

10 to 33 (FVAGLGGIGFDTSREIVKSGPKNL) contacts NAD(+). Serine 138 provides a ligand contact to substrate. Tyrosine 151 serves as the catalytic Proton acceptor.

This sequence belongs to the short-chain dehydrogenases/reductases (SDR) family. As to quaternary structure, homodimer.

The enzyme catalyses a primary alcohol + NAD(+) = an aldehyde + NADH + H(+). It carries out the reaction a secondary alcohol + NAD(+) = a ketone + NADH + H(+). The chain is Alcohol dehydrogenase 2 (Adh2) from Drosophila wheeleri (Fruit fly).